The chain runs to 251 residues: Tryptophan synthase alpha chain (251 aa).

Active-site proton acceptor residues include Glu46 and Asp57.

The protein belongs to the TrpA family. As to quaternary structure, tetramer of two alpha and two beta chains.

It catalyses the reaction (1S,2R)-1-C-(indol-3-yl)glycerol 3-phosphate + L-serine = D-glyceraldehyde 3-phosphate + L-tryptophan + H2O. The protein operates within amino-acid biosynthesis; L-tryptophan biosynthesis; L-tryptophan from chorismate: step 5/5. In terms of biological role, the alpha subunit is responsible for the aldol cleavage of indoleglycerol phosphate to indole and glyceraldehyde 3-phosphate. The protein is Tryptophan synthase alpha chain of Karelsulcia muelleri (strain GWSS) (Sulcia muelleri).